The sequence spans 254 residues: 3-deoxy-manno-octulosonate cytidylyltransferase (254 aa).

Belongs to the KdsB family.

It localises to the cytoplasm. It carries out the reaction 3-deoxy-alpha-D-manno-oct-2-ulosonate + CTP = CMP-3-deoxy-beta-D-manno-octulosonate + diphosphate. The protein operates within nucleotide-sugar biosynthesis; CMP-3-deoxy-D-manno-octulosonate biosynthesis; CMP-3-deoxy-D-manno-octulosonate from 3-deoxy-D-manno-octulosonate and CTP: step 1/1. Its pathway is bacterial outer membrane biogenesis; lipopolysaccharide biosynthesis. Its function is as follows. Activates KDO (a required 8-carbon sugar) for incorporation into bacterial lipopolysaccharide in Gram-negative bacteria. This is 3-deoxy-manno-octulosonate cytidylyltransferase from Haemophilus influenzae (strain 86-028NP).